A 436-amino-acid chain; its full sequence is 3-ketoacyl-CoA thiolase (436 aa).

Residue Cys99 is the Acyl-thioester intermediate of the active site. Active-site proton acceptor residues include His392 and Cys422.

The protein belongs to the thiolase-like superfamily. Thiolase family. Heterotetramer of two alpha chains (FadJ) and two beta chains (FadI).

Its subcellular location is the cytoplasm. It catalyses the reaction an acyl-CoA + acetyl-CoA = a 3-oxoacyl-CoA + CoA. It participates in lipid metabolism; fatty acid beta-oxidation. Functionally, catalyzes the final step of fatty acid oxidation in which acetyl-CoA is released and the CoA ester of a fatty acid two carbons shorter is formed. This Shigella boydii serotype 4 (strain Sb227) protein is 3-ketoacyl-CoA thiolase.